The chain runs to 511 residues: Maturase K (511 aa).

It belongs to the intron maturase 2 family. MatK subfamily.

The protein resides in the plastid. The protein localises to the chloroplast. Its function is as follows. Usually encoded in the trnK tRNA gene intron. Probably assists in splicing its own and other chloroplast group II introns. The sequence is that of Maturase K from Oryza nivara (Indian wild rice).